Here is a 495-residue protein sequence, read N- to C-terminus: MAAEPQPSSLSYRTTGSTYLHPLSELLGIPLDQVNFVVCQLVALFAAFWFRIYLRPGTTSSDVRHAVATIFGIYFVIFCFGWYSVHLFVLVLMCYAIMVTASVSNIHRYSFFVAMGYLTICHISRIYIFHYGILTTDFSGPLMIVTQKITTLAFQVHDGLGRRAEDLSAEQHRLAIKVKPSFLEYLSYLLNFMSVIAGPCNNFKDYIAFIEGKHIHMKLLEVNWKRKGFHSLPEPSPTGAVIHKLGITLVSLLLFLTLTKTFPVTCLVDDWFVHKASFPARLCYLYVVMQASKPKYYFAWTLADAVNNAAGFGFSGVDKNGNFCWDLLSNLNIWKIETATSFKMYLENWNIQTATWLKCVCYQRVPWYPTVLTFILSALWHGVYPGYYFTFLTGILVTLAARAVRNNYRHYFLSSRALKAVYDAGTWAVTQLAVSYTVAPFVMLAVEPTISLYKSMYFYLHIISLLIILFLPMKPQAHTQRRPQTLNSINKRKTD.

A run of 6 helical transmembrane segments spans residues 34–54 (VNFV…RIYL), 70–90 (IFGI…LFVL), 126–146 (IYIF…MIVT), 180–200 (PSFL…AGPC), 238–258 (TGAV…FLTL), and 297–317 (YFAW…FSGV). Residues Asn-350 and His-381 contribute to the active site. A run of 3 helical transmembrane segments spans residues 371–391 (VLTF…YFTF), 426–446 (TWAV…MLAV), and 450–470 (ISLY…IILF). A Phosphoserine modification is found at Ser-488.

It belongs to the membrane-bound acyltransferase family. In terms of tissue distribution, expressed in neutrophils.

It is found in the endoplasmic reticulum membrane. It carries out the reaction a 1-acyl-sn-glycero-3-phospho-L-serine + an acyl-CoA = a 1,2-diacyl-sn-glycero-3-phospho-L-serine + CoA. The enzyme catalyses a 1-acyl-sn-glycero-3-phosphocholine + an acyl-CoA = a 1,2-diacyl-sn-glycero-3-phosphocholine + CoA. It catalyses the reaction a 1-acyl-sn-glycero-3-phosphoethanolamine + an acyl-CoA = a 1,2-diacyl-sn-glycero-3-phosphoethanolamine + CoA. The catalysed reaction is 1-(9Z-octadecenoyl)-sn-glycero-3-phospho-L-serine + (9Z)-octadecenoyl-CoA = 1,2-di-(9Z)-octadecenoyl-sn-glycero-3-phospho-L-serine + CoA. It carries out the reaction 1-(9Z-octadecenoyl)-sn-glycero-3-phospho-L-serine + octadecanoyl-CoA = 1-(9Z-octadecenoyl)-2-octadecanoyl-sn-glycero-3-phospho-L-serine + CoA. The enzyme catalyses 1-(9Z-octadecenoyl)-sn-glycero-3-phospho-L-serine + (9Z)-hexadecenoyl-CoA = 1-(9Z-octadecenoyl)-2-(9Z-hexadecenoyl)-sn-glycero-3-phospho-L-serine + CoA. It catalyses the reaction 1-(9Z-octadecenoyl)-sn-glycero-3-phospho-L-serine + (9Z,12Z)-octadecadienoyl-CoA = 1-(9Z-octadecenoyl)-2-(9Z,12Z-octadienoyl)-sn-glycero-3-phospho-L-serine + CoA. The catalysed reaction is 1-hexadecanoyl-sn-glycero-3-phosphocholine + (9Z)-octadecenoyl-CoA = 1-hexadecanoyl-2-(9Z-octadecenoyl)-sn-glycero-3-phosphocholine + CoA. It carries out the reaction a 1-O-(1Z-alkenyl)-sn-glycero-3-phosphoethanolamine + (9Z)-octadecenoyl-CoA = 1-O-(1Z)-alkenyl-2-(9Z)-octadecenoyl-sn-glycero-3-phosphoethanolamine + CoA. The enzyme catalyses 1-octadecanoyl-sn-glycero-3-phosphoethanolamine + (9Z)-octadecenoyl-CoA = 1-octadecanoyl-2-(9Z-octadecenoyl)-sn-glycero-3-phosphoethanolamine + CoA. It catalyses the reaction 1-(9Z-octadecenoyl)-sn-glycero-3-phosphoethanolamine + (9Z)-octadecenoyl-CoA = 1,2-di-(9Z-octadecenoyl)-sn-glycero-3-phosphoethanolamine + CoA. The catalysed reaction is 1-hexadecanoyl-sn-glycero-3-phosphoethanolamine + (9Z)-octadecenoyl-CoA = 1-hexadecanoyl-2-(9Z-octadecenoyl)-sn-glycero-3-phosphoethanolamine + CoA. It carries out the reaction 1-(10Z-heptadecenoyl)-sn-glycero-3-phosphoethanolamine + hexadecanoyl-CoA = 1-(10Z-heptadecenoyl)-2-hexadecanoyl-sn-glycero-3-phosphoethanolamine + CoA. The enzyme catalyses 1-(10Z-heptadecenoyl)-sn-glycero-3-phosphoethanolamine + (9Z)-octadecenoyl-CoA = 1-(10Z-heptadecenoyl)-2-(9Z-octadecenoyl)-sn-glycero-3-phosphoethanolamine + CoA. The protein operates within lipid metabolism; phospholipid metabolism. With respect to regulation, partially inhibited by thimerosal. Acyltransferase which catalyzes the transfer of an acyl group from an acyl-CoA towards a lysophospholipid producing a phospholipid and participates in the reacylation step of the phospholipid remodeling pathway also known as the Lands cycle. Acts on lysophosphatidylserine (1-acyl-2-hydroxy-sn-glycero-3-phospho-L-serine or LPS) and lysophosphatidylethanolamine (1-acyl-sn-glycero-3-phosphoethanolamine or LPE), and to a lesser extend lysophosphatidylcholine. Prefers oleoyl-CoA as the acyl donor and 1-oleoyl-LPE as acceptor. May play a role in neurite outgrowth during neuronal differentiation. This is Membrane-bound glycerophospholipid O-acyltransferase 1 from Homo sapiens (Human).